The following is a 346-amino-acid chain: Ribosomal RNA small subunit methyltransferase H (346 aa).

S-adenosyl-L-methionine-binding positions include 46 to 48 (GGY), Asp63, Phe90, Asp113, and Gln120. The interval 270 to 327 (GGSAGSRHMPETHMRLPSFTPAVKGAVGPTPEEEERNPRARSAKLRAGIRTENSPLED) is disordered.

It belongs to the methyltransferase superfamily. RsmH family.

Its subcellular location is the cytoplasm. The catalysed reaction is cytidine(1402) in 16S rRNA + S-adenosyl-L-methionine = N(4)-methylcytidine(1402) in 16S rRNA + S-adenosyl-L-homocysteine + H(+). Functionally, specifically methylates the N4 position of cytidine in position 1402 (C1402) of 16S rRNA. The protein is Ribosomal RNA small subunit methyltransferase H of Brucella ovis (strain ATCC 25840 / 63/290 / NCTC 10512).